The sequence spans 612 residues: Proline-rich protein 14 (612 aa).

M1 bears the N-acetylmethionine mark. Polar residues-rich tracts occupy residues 1–15 and 86–96; these read MDLPGNSSPFTQPSL and VCTQSPALPSQ. Disordered stretches follow at residues 1 to 48, 65 to 96, 119 to 150, and 206 to 256; these read MDLP…EKAS, VPLTHKEDTPSPLTHNHHQDPVCTQSPALPSQ, RARQSSPALRMRSRAASGPEESPSKKTDQVPQ, and PTLT…PALE. The interval 1 to 135 is sufficient for heterochromatin association in interphase and chromatin association in anaphase; sequence MDLPGNSSPF…ALRMRSRAAS (135 aa). The interval 85 to 405 is required for the interaction with GRB2 and sufficient to promote the phosphorylation of AKT and cell proliferation; it reads PVCTQSPALP…MARTPPPPRP (321 aa). Residues 136-392 form a required for nuclear lamina association region; the sequence is GPEESPSKKT…QSRPRRHTVG (257 aa). Over residues 243–252 the composition is skewed to pro residues; it reads ADPPESPVPD. At S307 the chain carries Phosphoserine. 3 disordered regions span residues 323-405, 444-463, and 553-583; these read QSRA…PPRP, LGSTKGKELRASKDKVFSDP, and DSSLPRSRRPSRGVRTAASRTLTPNLAPSQD. Positions 342–359 are enriched in polar residues; sequence WRTQCNSLAPVSKSSLGR. The span at 366–379 shows a compositional bias: pro residues; the sequence is LGPPDPGSWPPVPS. The span at 448–463 shows a compositional bias: basic and acidic residues; the sequence is KGKELRASKDKVFSDP. The tract at residues 546 to 563 is required for nuclear localization; the sequence is RRAVEFRDSSLPRSRRPS. Residues 570-583 are compositionally biased toward polar residues; the sequence is ASRTLTPNLAPSQD.

In terms of assembly, interacts (via proline-rich region) with GRB2 (via SH3 domain 2). Interacts (via N-terminus) with CBX5.

The protein resides in the chromosome. The protein localises to the nucleus. It localises to the nucleus lamina. It is found in the nucleoplasm. In terms of biological role, functions in tethering peripheral heterochromatin to the nuclear lamina during interphase, possibly through the interaction with heterochromatin protein CBX5/HP1 alpha. Might play a role in reattaching heterochromatin to the nuclear lamina at mitotic exit. Promotes myoblast differentiation during skeletal myogenesis, possibly by stimulating transcription factor MyoD activity via binding to CBX5/HP1 alpha. Involved in the positive regulation of the PI3K-Akt-mTOR signaling pathway and in promoting cell proliferation, possibly via binding to GRB2. In Mus musculus (Mouse), this protein is Proline-rich protein 14 (Prr14).